The following is a 700-amino-acid chain: Elongation factor G (700 aa).

The tr-type G domain occupies E8 to V290. GTP is bound by residues A17–T24, D88–H92, and N142–D145.

It belongs to the TRAFAC class translation factor GTPase superfamily. Classic translation factor GTPase family. EF-G/EF-2 subfamily.

Its subcellular location is the cytoplasm. Its function is as follows. Catalyzes the GTP-dependent ribosomal translocation step during translation elongation. During this step, the ribosome changes from the pre-translocational (PRE) to the post-translocational (POST) state as the newly formed A-site-bound peptidyl-tRNA and P-site-bound deacylated tRNA move to the P and E sites, respectively. Catalyzes the coordinated movement of the two tRNA molecules, the mRNA and conformational changes in the ribosome. This chain is Elongation factor G, found in Paracidovorax citrulli (strain AAC00-1) (Acidovorax citrulli).